A 196-amino-acid chain; its full sequence is Gastrula zinc finger protein xLCGF3.1 (196 aa).

C2H2-type zinc fingers lie at residues 6-28, 34-56, 62-84, 90-112, 118-140, 146-168, and 174-196; these read FMCT…HMTH, FTCT…QTIH, FTCI…YMTH, FTCT…QTMH, LTCT…QRVH, FTCT…QTVH, and FTCT…QIVH.

It belongs to the krueppel C2H2-type zinc-finger protein family.

It is found in the nucleus. Functionally, may be involved in transcriptional regulation. This is Gastrula zinc finger protein xLCGF3.1 from Xenopus laevis (African clawed frog).